A 428-amino-acid polypeptide reads, in one-letter code: Sialidase-3 (428 aa).

The FRIP motif signature appears at 24 to 27 (YRIP). 2 residues coordinate substrate: R25 and R45. D50 functions as the Proton acceptor in the catalytic mechanism. A BNR 1 repeat occupies 129-140 (IYSQDAGCSWSE). The substrate site is built by Y179 and Y181. One copy of the BNR 2 repeat lies at 203 to 214 (IYSDDLGVTWHH). Substrate contacts are provided by E225 and R245. The stretch at 254–265 (ALSTDHGEGFQR) is one BNR 3 repeat. A disordered region spans residues 294 to 318 (RCQDSSSKDAPTIQQSSPGSSLRLE). Over residues 301–313 (KDAPTIQQSSPGS) the composition is skewed to polar residues. Residue S313 is modified to Phosphoserine. R340 provides a ligand contact to substrate. Y370 (nucleophile) is an active-site residue. The active site involves E387.

It belongs to the glycosyl hydrolase 33 family. In terms of assembly, interacts with CAV1; this interaction enhances NEU3 sialidase activity within caveola. Interacts with EGFR; this interaction mediates desialylation of EGFR and enhances downstream signaling. Palmitoylated; may regulate intracellular trafficking and anchorage to plasma membrane and endomembranes. In terms of tissue distribution, highly expressed in skeletal muscle, testis, adrenal gland and thymus, followed by pancreas, liver, heart and thymus. Weakly expressed in kidney, placenta, brain and lung.

Its subcellular location is the cell membrane. The protein localises to the membrane. The protein resides in the caveola. It is found in the early endosome membrane. It localises to the recycling endosome membrane. Its subcellular location is the lysosome membrane. The catalysed reaction is Hydrolysis of alpha-(2-&gt;3)-, alpha-(2-&gt;6)-, alpha-(2-&gt;8)- glycosidic linkages of terminal sialic acid residues in oligosaccharides, glycoproteins, glycolipids, colominic acid and synthetic substrates.. It carries out the reaction a ganglioside GD1a + H2O = a ganglioside GM1 + N-acetylneuraminate. The enzyme catalyses a ganglioside GD1a (d18:1(4E)) + H2O = a ganglioside GM1 (d18:1(4E)) + N-acetylneuraminate. It catalyses the reaction a ganglioside GD1b + H2O = a ganglioside GM1 + N-acetylneuraminate. The catalysed reaction is a ganglioside GD1b (d18:1(4E)) + H2O = a ganglioside GM1 (d18:1(4E)) + N-acetylneuraminate. It carries out the reaction a ganglioside GD3 + H2O = a ganglioside GM3 + N-acetylneuraminate. The enzyme catalyses a ganglioside GD3 (d18:1(4E)) + H2O = a ganglioside GM3 (d18:1(4E)) + N-acetylneuraminate. It catalyses the reaction a ganglioside GM3 + H2O = a beta-D-galactosyl-(1-&gt;4)-beta-D-glucosyl-(1&lt;-&gt;1)-ceramide + N-acetylneuraminate. The catalysed reaction is a ganglioside GM1 + H2O = a ganglioside GA1 + N-acetylneuraminate. It carries out the reaction a ganglioside GM1 (d18:1(4E)) + H2O = a ganglioside GA1 (d18:1(4E)) + N-acetylneuraminate. The enzyme catalyses a ganglioside GM2 (d18:1(4E)) + H2O = a ganglioside GA2 (d18:1(4E)) + N-acetylneuraminate. It catalyses the reaction a ganglioside GM3 (d18:1(4E)) + H2O = a beta-D-Gal-(1-&gt;4)-beta-D-Glc-(1&lt;-&gt;1)-Cer(d18:1(4E)) + N-acetylneuraminate. The catalysed reaction is a ganglioside GT1b + H2O = a ganglioside GD1b + N-acetylneuraminate. Exo-alpha-sialidase that catalyzes the hydrolytic cleavage of the terminal sialic acid (N-acetylneuraminic acid, Neu5Ac) of a glycan moiety in the catabolism of glycolipids, glycoproteins and oligosacharides. Displays high catalytic efficiency for gangliosides including alpha-(2-&gt;3)-sialylated GD1a and GM3 and alpha-(2-&gt;8)-sialylated GD3. Plays a role in the regulation of transmembrane signaling through the modulation of ganglioside content of the lipid bilayer and by direct interaction with signaling receptors, such as EGFR. Desialylates EGFR and activates downstream signaling in proliferating cells. Contributes to clathrin-mediated endocytosis by regulating sorting of endocytosed receptors to early and recycling endosomes. This is Sialidase-3 (NEU3) from Homo sapiens (Human).